Consider the following 333-residue polypeptide: Phosphate acyltransferase (333 aa).

This sequence belongs to the PlsX family. Homodimer. Probably interacts with PlsY.

Its subcellular location is the cytoplasm. It carries out the reaction a fatty acyl-[ACP] + phosphate = an acyl phosphate + holo-[ACP]. It functions in the pathway lipid metabolism; phospholipid metabolism. Catalyzes the reversible formation of acyl-phosphate (acyl-PO(4)) from acyl-[acyl-carrier-protein] (acyl-ACP). This enzyme utilizes acyl-ACP as fatty acyl donor, but not acyl-CoA. The chain is Phosphate acyltransferase from Lactobacillus gasseri (strain ATCC 33323 / DSM 20243 / BCRC 14619 / CIP 102991 / JCM 1131 / KCTC 3163 / NCIMB 11718 / NCTC 13722 / AM63).